Reading from the N-terminus, the 322-residue chain is MLRMLKRQQLHPGMILLLFWLCYLIEDQKVQAGNCWLQQGKNGRCQVLYMPGMSREECCRSGRLGTSWTEEDVPNSTLFRWMIFNGGAPNCIPCKETCDNVDCGPGKRCKMNRRSKPRCVCAPDCSNVTWKGPVCGSDGKTYRDECALLKSKCKGHPDLEVQYQGKCKKTCRDVLCPGSSTCVVDQTNNAYCVTCNRICPEVMSPDQYLCGNDGIVYASACHLRRATCLLGRSIGVAYEGKCIKAKSCDDIHCSAGKKCLWDAKMSRGRCAVCAESCPESRSEEAVCASDNTTYPSECAMKQAACSLGVLLEVKHSGSCNCK.

The first 32 residues, 1-32 (MLRMLKRQQLHPGMILLLFWLCYLIEDQKVQA), serve as a signal peptide directing secretion. The region spanning 33 to 106 (GNCWLQQGKN…TCDNVDCGPG (74 aa)) is the TB domain. 8 disulfides stabilise this stretch: Cys-35–Cys-58, Cys-45–Cys-91, Cys-59–Cys-94, Cys-98–Cys-109, Cys-103–Cys-119, Cys-121–Cys-153, Cys-125–Cys-146, and Cys-135–Cys-167. Asn-75 carries N-linked (GlcNAc...) asparagine glycosylation. A Follistatin-like 1 domain is found at 97–120 (TCDNVDCGPGKRCKMNRRSKPRCV). 3 consecutive Kazal-like domains span residues 103–169 (CGPG…KCKK), 189–244 (NAYC…KCIK), and 267–321 (RGRC…SCNC). N-linked (GlcNAc...) asparagine glycosylation occurs at Asn-127. Residues 170–193 (TCRDVLCPGSSTCVVDQTNNAYCV) form the Follistatin-like 2 domain. Cystine bridges form between Cys-195–Cys-228, Cys-199–Cys-221, and Cys-210–Cys-242. A Follistatin-like 3 domain is found at 247 to 271 (SCDDIHCSAGKKCLWDAKMSRGRCA). Intrachain disulfides connect Cys-273-Cys-305, Cys-277-Cys-298, and Cys-287-Cys-319. An N-linked (GlcNAc...) asparagine glycan is attached at Asn-291.

As to quaternary structure, monomer. In terms of tissue distribution, not expressed in the organizer region. Expression in gastrulating embryos is confined to anterior and paraxial regions, which give rise to head mesoderm and the first five somites. In addition, expressed transiently in a subset of cells in the posterior notochord anlage. Later, expression is seen in brain, eyes and somites.

Binds directly to activin and functions as an activin antagonist. Specific inhibitor of the biosynthesis and secretion of pituitary follicle stimulating hormone (fsh). Inhibits bmp-signaling during later stages of development including late phases of dorsoventral patterning, to refine the early pattern set up by the interaction of chordino and bmp2/4. Not involved in organizer function or early phases of dorsoventral pattern formation. In Danio rerio (Zebrafish), this protein is Follistatin-A (fsta).